Consider the following 269-residue polypeptide: 3-deoxy-manno-octulosonate cytidylyltransferase (269 aa).

Belongs to the KdsB family.

Its subcellular location is the cytoplasm. It carries out the reaction 3-deoxy-alpha-D-manno-oct-2-ulosonate + CTP = CMP-3-deoxy-beta-D-manno-octulosonate + diphosphate. The protein operates within nucleotide-sugar biosynthesis; CMP-3-deoxy-D-manno-octulosonate biosynthesis; CMP-3-deoxy-D-manno-octulosonate from 3-deoxy-D-manno-octulosonate and CTP: step 1/1. It functions in the pathway bacterial outer membrane biogenesis; lipopolysaccharide biosynthesis. Activates KDO (a required 8-carbon sugar) for incorporation into bacterial lipopolysaccharide in Gram-negative bacteria. The sequence is that of 3-deoxy-manno-octulosonate cytidylyltransferase from Cupriavidus necator (strain ATCC 17699 / DSM 428 / KCTC 22496 / NCIMB 10442 / H16 / Stanier 337) (Ralstonia eutropha).